Here is a 51-residue protein sequence, read N- to C-terminus: Large ribosomal subunit protein eL39 (51 aa).

It belongs to the eukaryotic ribosomal protein eL39 family.

The chain is Large ribosomal subunit protein eL39 (rpl39e) from Aeropyrum pernix (strain ATCC 700893 / DSM 11879 / JCM 9820 / NBRC 100138 / K1).